An 835-amino-acid chain; its full sequence is Microcephalin (835 aa).

Residues 1-93 (MAAPILKDVV…AHIDESLFPA (93 aa)) enclose the BRCT 1 domain. A disordered region spans residues 184-206 (KEKRENLSPTSSQLIQQSHDNPS). The span at 190–206 (LSPTSSQLIQQSHDNPS) shows a compositional bias: polar residues. Ser279, Ser287, Ser296, and Ser333 each carry phosphoserine. At Thr335 the chain carries Phosphothreonine. Residues 346–361 (HSRPRSSSVKRKRVSH) show a composition bias toward basic residues. Disordered stretches follow at residues 346–376 (HSRP…RKRS) and 418–442 (PDNL…PAQF). Ser548 carries the phosphoserine modification. The segment at 557-582 (GLKSTQNRGTTSKISNSSEGEAQSEH) is disordered. A compositionally biased stretch (polar residues) spans 559–577 (KSTQNRGTTSKISNSSEGE). 2 consecutive BRCT domains span residues 640 to 730 (SGRG…PFEL) and 751 to 833 (YRGT…NYLL).

As to quaternary structure, interacts with CDC27 and maybe other components of the APC/C complex. Interacts with histone variant H2AX under DNA damage conditions.

The protein resides in the cytoplasm. The protein localises to the cytoskeleton. Its subcellular location is the microtubule organizing center. It is found in the centrosome. Functionally, implicated in chromosome condensation and DNA damage induced cellular responses. May play a role in neurogenesis and regulation of the size of the cerebral cortex. The polypeptide is Microcephalin (Gorilla gorilla gorilla (Western lowland gorilla)).